The chain runs to 219 residues: Thiopurine S-methyltransferase (219 aa).

Positions 10, 45, 66, and 123 each coordinate S-adenosyl-L-methionine.

This sequence belongs to the class I-like SAM-binding methyltransferase superfamily. TPMT family.

Its subcellular location is the cytoplasm. The enzyme catalyses S-adenosyl-L-methionine + a thiopurine = S-adenosyl-L-homocysteine + a thiopurine S-methylether.. The protein is Thiopurine S-methyltransferase of Bordetella pertussis (strain Tohama I / ATCC BAA-589 / NCTC 13251).